A 102-amino-acid chain; its full sequence is Putative ubiquitin-like protein FUBI-like protein ENSP00000310146 (102 aa).

The 77-residue stretch at 23–99 (LCPQVAYVRA…LEVVGRRLGV (77 aa)) folds into the Ubiquitin-like domain.

In Homo sapiens (Human), this protein is Putative ubiquitin-like protein FUBI-like protein ENSP00000310146.